Reading from the N-terminus, the 143-residue chain is Large ribosomal subunit protein uL11 (143 aa).

Belongs to the universal ribosomal protein uL11 family. As to quaternary structure, part of the ribosomal stalk of the 50S ribosomal subunit. Interacts with L10 and the large rRNA to form the base of the stalk. L10 forms an elongated spine to which L12 dimers bind in a sequential fashion forming a multimeric L10(L12)X complex. Post-translationally, one or more lysine residues are methylated.

Forms part of the ribosomal stalk which helps the ribosome interact with GTP-bound translation factors. The sequence is that of Large ribosomal subunit protein uL11 from Marinobacter nauticus (strain ATCC 700491 / DSM 11845 / VT8) (Marinobacter aquaeolei).